We begin with the raw amino-acid sequence, 572 residues long: Proline--tRNA ligase (572 aa).

It belongs to the class-II aminoacyl-tRNA synthetase family. ProS type 1 subfamily. As to quaternary structure, homodimer.

The protein localises to the cytoplasm. The catalysed reaction is tRNA(Pro) + L-proline + ATP = L-prolyl-tRNA(Pro) + AMP + diphosphate. Catalyzes the attachment of proline to tRNA(Pro) in a two-step reaction: proline is first activated by ATP to form Pro-AMP and then transferred to the acceptor end of tRNA(Pro). As ProRS can inadvertently accommodate and process non-cognate amino acids such as alanine and cysteine, to avoid such errors it has two additional distinct editing activities against alanine. One activity is designated as 'pretransfer' editing and involves the tRNA(Pro)-independent hydrolysis of activated Ala-AMP. The other activity is designated 'posttransfer' editing and involves deacylation of mischarged Ala-tRNA(Pro). The misacylated Cys-tRNA(Pro) is not edited by ProRS. This is Proline--tRNA ligase from Caldicellulosiruptor bescii (strain ATCC BAA-1888 / DSM 6725 / KCTC 15123 / Z-1320) (Anaerocellum thermophilum).